Consider the following 208-residue polypeptide: Flavin-dependent thymidylate synthase (208 aa).

Residues 1–208 form the ThyX domain; it reads MEVICKHYTP…QYLFEDCLKH (208 aa). FAD is bound by residues serine 50 and 74 to 76; that span reads RHR. DUMP contacts are provided by residues 71–74, 84–86, and lysine 147; these read ELSR and SSR. The ThyX motif motif lies at 74–84; sequence RHRIASLSVKS. FAD-binding positions include 163–165 and asparagine 169; that span reads NAR. Residue arginine 174 participates in dUMP binding. Arginine 174 serves as the catalytic Involved in ionization of N3 of dUMP, leading to its activation.

Belongs to the thymidylate synthase ThyX family. As to quaternary structure, homotetramer. FAD is required as a cofactor.

The enzyme catalyses dUMP + (6R)-5,10-methylene-5,6,7,8-tetrahydrofolate + NADPH + H(+) = dTMP + (6S)-5,6,7,8-tetrahydrofolate + NADP(+). The protein operates within pyrimidine metabolism; dTTP biosynthesis. Functionally, catalyzes the reductive methylation of 2'-deoxyuridine-5'-monophosphate (dUMP) to 2'-deoxythymidine-5'-monophosphate (dTMP) while utilizing 5,10-methylenetetrahydrofolate (mTHF) as the methyl donor, and NADPH and FADH(2) as the reductant. The polypeptide is Flavin-dependent thymidylate synthase (Helicobacter pylori (strain J99 / ATCC 700824) (Campylobacter pylori J99)).